A 457-amino-acid polypeptide reads, in one-letter code: tRNA modification GTPase MnmE (457 aa).

(6S)-5-formyl-5,6,7,8-tetrahydrofolate-binding residues include Arg-22, Glu-85, and Arg-124. Residues 219-378 form the TrmE-type G domain; it reads GATVVIAGKP…LKEKIYDLVL (160 aa). Asn-229 is a K(+) binding site. GTP contacts are provided by residues 229 to 234, 248 to 254, 273 to 276, and 333 to 336; these read NTGKSS, TPVPGTT, DTAG, and NKAD. Ser-233 is a binding site for Mg(2+). 3 residues coordinate K(+): Thr-248, Val-250, and Thr-253. Thr-254 lines the Mg(2+) pocket. Lys-457 lines the (6S)-5-formyl-5,6,7,8-tetrahydrofolate pocket.

It belongs to the TRAFAC class TrmE-Era-EngA-EngB-Septin-like GTPase superfamily. TrmE GTPase family. In terms of assembly, homodimer. Heterotetramer of two MnmE and two MnmG subunits. K(+) serves as cofactor.

It localises to the cytoplasm. Exhibits a very high intrinsic GTPase hydrolysis rate. Involved in the addition of a carboxymethylaminomethyl (cmnm) group at the wobble position (U34) of certain tRNAs, forming tRNA-cmnm(5)s(2)U34. This Syntrophus aciditrophicus (strain SB) protein is tRNA modification GTPase MnmE.